Reading from the N-terminus, the 149-residue chain is Transcription antitermination protein NusB (149 aa).

It belongs to the NusB family.

Involved in transcription antitermination. Required for transcription of ribosomal RNA (rRNA) genes. Binds specifically to the boxA antiterminator sequence of the ribosomal RNA (rrn) operons. The sequence is that of Transcription antitermination protein NusB from Acinetobacter baumannii (strain AB307-0294).